We begin with the raw amino-acid sequence, 451 residues long: uncharacterized protein (451 aa).

Positions 1–22 (MKLKLIFSLFLVLVFCSLFVFG) are cleaved as a signal peptide. Residues Asn-25, Asn-45, Asn-209, Asn-326, and Asn-402 are each glycosylated (N-linked (GlcNAc...) asparagine).

It is found in the secreted. This is an uncharacterized protein from Dictyostelium discoideum (Social amoeba).